The chain runs to 302 residues: Recombination-associated protein RdgC (302 aa).

It belongs to the RdgC family.

It localises to the cytoplasm. Its subcellular location is the nucleoid. In terms of biological role, may be involved in recombination. This Proteus mirabilis (strain HI4320) protein is Recombination-associated protein RdgC.